The primary structure comprises 728 residues: Diacylglycerol kinase 1 (728 aa).

The chain crosses the membrane as a helical span at residues 27 to 48 (GLMFSCFVAALVGILTIAYTAF). 2 Phorbol-ester/DAG-type zinc fingers span residues 79–137 (PHSW…PKDC) and 149–212 (VHQW…GDIC). Disordered regions lie at residues 265-296 (KQTN…PTVN) and 308-336 (VMNG…TGSF). Positions 267–294 (TNETSADTGNSGSNCDESTESTADTGPT) are enriched in polar residues. Positions 310–319 (NGDSSNGDSD) are enriched in low complexity. The DAGKc domain occupies 357–496 (SDARPLLVFI…LDRWKVSILN (140 aa)). Residues K491 and K500 each participate in a glycyl lysine isopeptide (Lys-Gly) (interchain with G-Cter in ubiquitin) cross-link.

This sequence belongs to the eukaryotic diacylglycerol kinase family. In terms of assembly, monomer. In terms of tissue distribution, expressed in roots, shoots, and leaves.

It is found in the membrane. The catalysed reaction is a 1,2-diacyl-sn-glycerol + ATP = a 1,2-diacyl-sn-glycero-3-phosphate + ADP + H(+). Its function is as follows. Phosphorylates the second messenger diacylglycerol (DAG) to generate phosphatidic acid (PA), another important signaling molecule. PA is required for plant development and responses to abiotic stress and pathogen attack. May be involved in the accumulation of PA during cold stress. In Arabidopsis thaliana (Mouse-ear cress), this protein is Diacylglycerol kinase 1 (DGK1).